A 215-amino-acid chain; its full sequence is Large ribosomal subunit protein uL4 (215 aa).

Residues 51–88 (KGMGEVSGTTKKPYRQKGTGNARQGSLRAPQFRTGGAV) are disordered.

This sequence belongs to the universal ribosomal protein uL4 family. As to quaternary structure, part of the 50S ribosomal subunit.

One of the primary rRNA binding proteins, this protein initially binds near the 5'-end of the 23S rRNA. It is important during the early stages of 50S assembly. It makes multiple contacts with different domains of the 23S rRNA in the assembled 50S subunit and ribosome. Functionally, forms part of the polypeptide exit tunnel. The protein is Large ribosomal subunit protein uL4 of Granulibacter bethesdensis (strain ATCC BAA-1260 / CGDNIH1).